The sequence spans 436 residues: Fasciclin-like arabinogalactan protein 15 (436 aa).

A signal peptide spans 1-20 (MDDLSKLLFFLLLTISITTA). 2 FAS1 domains span residues 31–165 (NSNS…ERLL) and 249–392 (VKDF…DGVL). N-linked (GlcNAc...) asparagine glycans are attached at residues Asn68 and Asn271.

It belongs to the fasciclin-like AGP family.

It is found in the secreted. Functionally, may be a cell surface adhesion protein. In Arabidopsis thaliana (Mouse-ear cress), this protein is Fasciclin-like arabinogalactan protein 15 (FLA15).